Here is a 731-residue protein sequence, read N- to C-terminus: Catalase-peroxidase (731 aa).

The tract at residues 1–24 (MSTEPNCPFSGNARKHTAAGAPSN) is disordered. Positions 96 to 219 (WHSAGTYRVS…LGAVQMGLIY (124 aa)) form a cross-link, tryptophyl-tyrosyl-methioninium (Trp-Tyr) (with M-245). The Proton acceptor role is filled by H97. A cross-link (tryptophyl-tyrosyl-methioninium (Tyr-Met) (with W-96)) is located at residues 219–245 (YVNPEGPNGNPDPIAAARDIRETFARM). H260 contacts heme b. The segment at 339 to 365 (GAQQWKPKGDAGAGTVPDAHDPSKRHA) is disordered.

This sequence belongs to the peroxidase family. Peroxidase/catalase subfamily. Homodimer or homotetramer. Heme b serves as cofactor. In terms of processing, formation of the three residue Trp-Tyr-Met cross-link is important for the catalase, but not the peroxidase activity of the enzyme.

It carries out the reaction H2O2 + AH2 = A + 2 H2O. It catalyses the reaction 2 H2O2 = O2 + 2 H2O. In terms of biological role, bifunctional enzyme with both catalase and broad-spectrum peroxidase activity. The protein is Catalase-peroxidase of Polaromonas sp. (strain JS666 / ATCC BAA-500).